A 377-amino-acid polypeptide reads, in one-letter code: Probable riboflavin import permease protein RfuC (377 aa).

Transmembrane regions (helical) follow at residues 4-24, 49-69, 72-92, 98-118, 135-155, 182-202, 223-245, 249-268, 274-294, and 303-323; these read VINS…VIVL, ALFH…CALK, MINL…ALLL, VGFL…AGIL, ITSF…IITV, FGVP…GCFF, FVGF…LFGL, FSVV…GMGY, ALIA…FAWM, and LGAH…FLLI.

The protein belongs to the binding-protein-dependent transport system permease family. The complex is probably composed of two ATP-binding proteins (RfuB), two transmembrane proteins (RfuC and RfuD) and a solute-binding protein (RfuA).

The protein localises to the cell inner membrane. In terms of biological role, probably part of the ABC transporter complex RfuABCD involved in riboflavin import. Probably responsible for the translocation of the substrate across the membrane. This Treponema pallidum (strain Nichols) protein is Probable riboflavin import permease protein RfuC.